The following is a 633-amino-acid chain: MGDLPGSTGGGGGVGGGGNGGGGPTIAGTNGNSTTGPGSSTGSTGLERPPSPARLSHTSEKHPKVTLSELNMLRRHRELCDVVLNVGGRKIFAHRVILSACSSYFCAMFTGELEESRQTEVTIRDIDENAMELLIDFCYTAHIIVEESNVQTLLPAACLLQLVEIQDICCEFLKRQLDPTNCLGIRAFADTHSCRELLRIADKFTQHNFQEVMESEEFLLLPVGQLVDIICSDELNVRSEEQVFNAVMSWLKYNVAERRQHLPQVLQHVRLPLLSPKFLVGTVGSDLLVRSDEACRDLVDEAKNYLLLPQERPLMQGPRTRPRKPTRRGEVLFAVGGWCSGDAIASVERFDPQTNDWKMVAPMSKRRCGVGVAVLNDLLYAVGGHDGQSYLNSIERYDPQTNQWSCDVAPTTSCRTSVGVAVLDGFLYAVGGQDGVQCLNHVERYDPKENKWSKVAPMTTRRLGVAVAVLGGFLYAIGGSDGQCPLNTVERYDPRHNKWVAVSPMSTRRKHLGCAVFNNYIYAVGGRDDCMELSSAERYNPLTNTWSPIVAMTSRRSGVGLAVVNGQLYAVGGFDGSAYLKTIEVYDPETNQWRLCGCMNYRRLGGGVGVMRAPQTENYMWCENSFKQQATSN.

The tract at residues 1–62 is disordered; the sequence is MGDLPGSTGG…ARLSHTSEKH (62 aa). The span at 7–25 shows a compositional bias: gly residues; sequence STGGGGGVGGGGNGGGGPT. Over residues 26–45 the composition is skewed to low complexity; sequence IAGTNGNSTTGPGSSTGSTG. The BTB domain occupies 80–147; it reads CDVVLNVGGR…CYTAHIIVEE (68 aa). Residues 182–284 form the BACK domain; sequence CLGIRAFADT…SPKFLVGTVG (103 aa). 6 Kelch repeats span residues 331–377, 379–425, 426–472, 474–519, 521–566, and 567–613; these read VLFA…VLND, LYAV…VLDG, FLYA…VLGG, LYAI…VFNN, IYAV…VVNG, and QLYA…VMRA.

Its pathway is protein modification; protein ubiquitination. Its function is as follows. Probable substrate-specific adapter of an E3 ubiquitin-protein ligase complex which mediates the ubiquitination and subsequent proteasomal degradation of target proteins. May have a role in synapse differentiation and growth. The chain is Kelch-like protein diablo from Drosophila ananassae (Fruit fly).